Here is a 452-residue protein sequence, read N- to C-terminus: Probable diguanylate cyclase DgcT (452 aa).

Residues 1 to 7 (MEKDYLR) lie on the Cytoplasmic side of the membrane. Residues 8–28 (ISSTVLVSLLFGLALVLVNSW) traverse the membrane as a helical segment. Over 29–45 (FNQPGVEEVVPRSTYLM) the chain is Periplasmic. The chain crosses the membrane as a helical span at residues 46-66 (VMIALFFIDTVAFIFMQLYFI). Residues 67–74 (YDRRQFSN) are Cytoplasmic-facing. A helical membrane pass occupies residues 75-95 (CVLSLAFLSCLIYFVITVIII). The Periplasmic segment spans residues 96-111 (QQIIEERLTSSVVQND). Residues 112 to 132 (IAIYYLFRQMSLCILIFLALV) traverse the membrane as a helical segment. At 133-148 (NKVSENTKQRNLFSKK) the chain is on the cytoplasmic side. The helical transmembrane segment at 149 to 169 (MTLCISLFFVFGGPIVAHILS) threads the bilayer. At 170-195 (SHYESYNLHIAELTNENGQVVWKASY) the chain is on the periplasmic side. A helical transmembrane segment spans residues 196-216 (VTIMIFMWLTLLSVNLYFNGL). Topologically, residues 217-219 (RYD) are cytoplasmic. The helical transmembrane segment at 220–240 (IWNGVTVIAFCAVLYNISLLF) threads the bilayer. The Periplasmic portion of the chain corresponds to 241–254 (MSRYSVSTWYISRT). The chain crosses the membrane as a helical span at residues 255–275 (IEVVSKLTVMVIFMCHIFSAL). Residues 276-452 (RVTKNIAHRD…RDVVNFCESP (177 aa)) are Cytoplasmic-facing. Residues 310–445 (TPYCVMIMDI…GRNKVVVRDV (136 aa)) enclose the GGDEF domain. Residues aspartate 318 and isoleucine 319 each coordinate Mg(2+). Positions 326, 331, and 335 each coordinate substrate. Glutamate 361 contacts Mg(2+). Glutamate 361 serves as the catalytic Proton acceptor. Arginine 381 is a binding site for substrate.

Homodimer. Mg(2+) serves as cofactor.

It localises to the cell inner membrane. The enzyme catalyses 2 GTP = 3',3'-c-di-GMP + 2 diphosphate. The protein operates within purine metabolism; 3',5'-cyclic di-GMP biosynthesis. Probably catalyzes the synthesis of cyclic-di-GMP (c-di-GMP) via the condensation of 2 GTP molecules. Overexpression leads to a strong repression of swimming; swimming returns to normal when residues 359-360 are both mutated to Ala. Overexpression also leads to a 20-fold increase in c-di-GMP levels in vivo. Cyclic-di-GMP is a second messenger which controls cell surface-associated traits in bacteria. This Escherichia coli (strain K12) protein is Probable diguanylate cyclase DgcT.